The sequence spans 244 residues: rRNA adenine N-6-methyltransferase (244 aa).

S-adenosyl-L-methionine contacts are provided by Asn11, Ile13, Gly38, Glu59, Asp84, and Asn101.

This sequence belongs to the class I-like SAM-binding methyltransferase superfamily. rRNA adenine N(6)-methyltransferase family.

It catalyses the reaction adenosine(2085) in 23S rRNA + 2 S-adenosyl-L-methionine = N(6)-dimethyladenosine(2085) in 23S rRNA + 2 S-adenosyl-L-homocysteine + 2 H(+). Functionally, this protein produces a dimethylation of the adenine residue at position 2085 in 23S rRNA, resulting in reduced affinity between ribosomes and macrolide-lincosamide-streptogramin B antibiotics. The chain is rRNA adenine N-6-methyltransferase (ermC) from Staphylococcus aureus.